An 885-amino-acid chain; its full sequence is Leucine--tRNA ligase (885 aa).

The 'HIGH' region motif lies at 48–58; sequence PYPSGKLHMGH. The 'KMSKS' region motif lies at 639–643; it reads TMSKS. K642 contributes to the ATP binding site.

It belongs to the class-I aminoacyl-tRNA synthetase family.

It is found in the cytoplasm. The catalysed reaction is tRNA(Leu) + L-leucine + ATP = L-leucyl-tRNA(Leu) + AMP + diphosphate. The sequence is that of Leucine--tRNA ligase from Bordetella avium (strain 197N).